The following is a 472-amino-acid chain: Putative diacyglycerol O-acyltransferase MT3172 (472 aa).

The active-site Proton acceptor is histidine 139. Positions 217 to 238 (DRRVPPTFDRSAPPGPFQRGLS) are disordered.

It belongs to the long-chain O-acyltransferase family.

It carries out the reaction an acyl-CoA + a 1,2-diacyl-sn-glycerol = a triacyl-sn-glycerol + CoA. Its pathway is glycerolipid metabolism; triacylglycerol biosynthesis. This is Putative diacyglycerol O-acyltransferase MT3172 from Mycobacterium tuberculosis (strain CDC 1551 / Oshkosh).